The sequence spans 193 residues: ATP-dependent Clp protease proteolytic subunit (193 aa).

The active-site Nucleophile is S98. H123 is an active-site residue.

It belongs to the peptidase S14 family. As to quaternary structure, fourteen ClpP subunits assemble into 2 heptameric rings which stack back to back to give a disk-like structure with a central cavity, resembling the structure of eukaryotic proteasomes.

It is found in the cytoplasm. The catalysed reaction is Hydrolysis of proteins to small peptides in the presence of ATP and magnesium. alpha-casein is the usual test substrate. In the absence of ATP, only oligopeptides shorter than five residues are hydrolyzed (such as succinyl-Leu-Tyr-|-NHMec, and Leu-Tyr-Leu-|-Tyr-Trp, in which cleavage of the -Tyr-|-Leu- and -Tyr-|-Trp bonds also occurs).. Its function is as follows. Cleaves peptides in various proteins in a process that requires ATP hydrolysis. Has a chymotrypsin-like activity. Plays a major role in the degradation of misfolded proteins. This Pasteurella multocida (strain Pm70) protein is ATP-dependent Clp protease proteolytic subunit.